Reading from the N-terminus, the 423-residue chain is D-tagatose-1,6-bisphosphate aldolase subunit GatZ (423 aa).

It belongs to the GatZ/KbaZ family. GatZ subfamily. In terms of assembly, forms a complex with GatY.

It participates in carbohydrate metabolism; D-tagatose 6-phosphate degradation; D-glyceraldehyde 3-phosphate and glycerone phosphate from D-tagatose 6-phosphate: step 2/2. In terms of biological role, component of the tagatose-1,6-bisphosphate aldolase GatYZ that is required for full activity and stability of the Y subunit. Could have a chaperone-like function for the proper and stable folding of GatY. When expressed alone, GatZ does not show any aldolase activity. Is involved in the catabolism of galactitol. The protein is D-tagatose-1,6-bisphosphate aldolase subunit GatZ of Salmonella heidelberg (strain SL476).